The sequence spans 441 residues: Ribosomal protein uS12 methylthiotransferase RimO (441 aa).

The 111-residue stretch at 7–117 (PKISFVSLGC…VLEAVHRALP (111 aa)) folds into the MTTase N-terminal domain. [4Fe-4S] cluster contacts are provided by Cys16, Cys52, Cys81, Cys148, Cys152, and Cys155. The Radical SAM core domain maps to 134–371 (LTPRHYAYLK…MARQQKISAR (238 aa)). Positions 374–440 (KRKVGTRQQV…AYDLHGTVAG (67 aa)) constitute a TRAM domain.

The protein belongs to the methylthiotransferase family. RimO subfamily. Requires [4Fe-4S] cluster as cofactor.

The protein localises to the cytoplasm. It catalyses the reaction L-aspartate(89)-[ribosomal protein uS12]-hydrogen + (sulfur carrier)-SH + AH2 + 2 S-adenosyl-L-methionine = 3-methylsulfanyl-L-aspartate(89)-[ribosomal protein uS12]-hydrogen + (sulfur carrier)-H + 5'-deoxyadenosine + L-methionine + A + S-adenosyl-L-homocysteine + 2 H(+). In terms of biological role, catalyzes the methylthiolation of an aspartic acid residue of ribosomal protein uS12. This Rhodopseudomonas palustris (strain BisA53) protein is Ribosomal protein uS12 methylthiotransferase RimO.